A 396-amino-acid polypeptide reads, in one-letter code: Tryptophan synthase beta chain (396 aa).

Lys86 is modified (N6-(pyridoxal phosphate)lysine).

It belongs to the TrpB family. As to quaternary structure, tetramer of two alpha and two beta chains. Pyridoxal 5'-phosphate serves as cofactor.

The catalysed reaction is (1S,2R)-1-C-(indol-3-yl)glycerol 3-phosphate + L-serine = D-glyceraldehyde 3-phosphate + L-tryptophan + H2O. It functions in the pathway amino-acid biosynthesis; L-tryptophan biosynthesis; L-tryptophan from chorismate: step 5/5. Its function is as follows. The beta subunit is responsible for the synthesis of L-tryptophan from indole and L-serine. This Erwinia tasmaniensis (strain DSM 17950 / CFBP 7177 / CIP 109463 / NCPPB 4357 / Et1/99) protein is Tryptophan synthase beta chain.